An 854-amino-acid chain; its full sequence is DNA mismatch repair protein MutS (854 aa).

614–621 (GPNMGGKS) is an ATP binding site.

This sequence belongs to the DNA mismatch repair MutS family.

Functionally, this protein is involved in the repair of mismatches in DNA. It is possible that it carries out the mismatch recognition step. This protein has a weak ATPase activity. The protein is DNA mismatch repair protein MutS of Yersinia pestis bv. Antiqua (strain Antiqua).